Reading from the N-terminus, the 225-residue chain is ATP-dependent dethiobiotin synthetase BioD (225 aa).

12–17 (EIGKTY) serves as a coordination point for ATP. Thr16 is a Mg(2+) binding site. Lys37 is a catalytic residue. Ser41 serves as a coordination point for substrate. ATP-binding positions include Asp55, 122–125 (EGVG), and 182–183 (SE). Mg(2+) is bound by residues Asp55 and Glu122.

Belongs to the dethiobiotin synthetase family. As to quaternary structure, homodimer. Requires Mg(2+) as cofactor.

The protein resides in the cytoplasm. The enzyme catalyses (7R,8S)-7,8-diammoniononanoate + CO2 + ATP = (4R,5S)-dethiobiotin + ADP + phosphate + 3 H(+). It functions in the pathway cofactor biosynthesis; biotin biosynthesis; biotin from 7,8-diaminononanoate: step 1/2. Catalyzes a mechanistically unusual reaction, the ATP-dependent insertion of CO2 between the N7 and N8 nitrogen atoms of 7,8-diaminopelargonic acid (DAPA, also called 7,8-diammoniononanoate) to form a ureido ring. The sequence is that of ATP-dependent dethiobiotin synthetase BioD from Methylobacterium nodulans (strain LMG 21967 / CNCM I-2342 / ORS 2060).